We begin with the raw amino-acid sequence, 813 residues long: Calpain-7 (813 aa).

Position 1 is an N-acetylmethionine (Met1). Thr95 bears the Phosphothreonine mark. A Calpain catalytic domain is found at 232–540 (RERFAYPMPF…YDVIYLSWNP (309 aa)). Active-site residues include Cys290, His458, and Asn478. Residues 541-701 (GLLKESTCIH…INGKWSGQSA (161 aa)) are domain III. The domain N stretch occupies residues 702–813 (GGCGNFQETH…VIPIKTTQLQ (112 aa)).

The protein belongs to the peptidase C2 family.

It is found in the nucleus. Functionally, calcium-regulated non-lysosomal thiol-protease. This Sus scrofa (Pig) protein is Calpain-7 (CAPN7).